We begin with the raw amino-acid sequence, 214 residues long: Predicted GPI-anchored protein 57 (214 aa).

The first 18 residues, 1 to 18 (MLFTQLIILFTFISQIIC), serve as a signal peptide directing secretion. The interval 36–101 (RGSSGHSSGG…SSGSSSGSRN (66 aa)) is disordered. Residues 42–60 (SSGGGHSSSGSHSSGGGHS) show a composition bias toward gly residues. The segment covering 76–85 (SGSSSGSSSG) has biased composition (low complexity). Asn-182 is a glycosylation site (N-linked (GlcNAc...) asparagine). Gly-191 carries the GPI-anchor amidated glycine lipid modification. The propeptide at 192–214 (VSLNIPSTHFYVIGLAAAYSIVL) is removed in mature form.

Belongs to the PGA37 family.

It localises to the secreted. The protein resides in the cell membrane. In terms of biological role, predicted GPI-anchored protein which may have a role during host infection. The chain is Predicted GPI-anchored protein 57 (PGA57) from Candida albicans (strain SC5314 / ATCC MYA-2876) (Yeast).